Reading from the N-terminus, the 66-residue chain is Large ribosomal subunit protein bL35 (66 aa).

The protein belongs to the bacterial ribosomal protein bL35 family.

The polypeptide is Large ribosomal subunit protein bL35 (Methylobacterium nodulans (strain LMG 21967 / CNCM I-2342 / ORS 2060)).